The primary structure comprises 238 residues: tRNA (guanine-N(7)-)-methyltransferase (238 aa).

Glu-68, Glu-93, Asp-120, and Asp-143 together coordinate S-adenosyl-L-methionine. Asp-143 is a catalytic residue. Substrate contacts are provided by residues Lys-147, Asp-179, and 216–219 (TKFE).

Belongs to the class I-like SAM-binding methyltransferase superfamily. TrmB family.

It catalyses the reaction guanosine(46) in tRNA + S-adenosyl-L-methionine = N(7)-methylguanosine(46) in tRNA + S-adenosyl-L-homocysteine. It functions in the pathway tRNA modification; N(7)-methylguanine-tRNA biosynthesis. In terms of biological role, catalyzes the formation of N(7)-methylguanine at position 46 (m7G46) in tRNA. In Aliivibrio fischeri (strain MJ11) (Vibrio fischeri), this protein is tRNA (guanine-N(7)-)-methyltransferase.